The sequence spans 295 residues: Glycine N-acyltransferase-like protein Keg1 (295 aa).

The residue at position 41 (lysine 41) is an N6-acetyllysine; alternate. The residue at position 41 (lysine 41) is an N6-succinyllysine; alternate. The residue at position 43 (lysine 43) is an N6-acetyllysine. Lysine 48 is subject to N6-acetyllysine; alternate. N6-succinyllysine; alternate is present on lysine 48. Lysine 80 and lysine 83 each carry N6-acetyllysine. N6-acetyllysine; alternate occurs at positions 124, 128, and 140. N6-succinyllysine; alternate is present on residues lysine 124, lysine 128, and lysine 140. Lysine 150 is modified (N6-acetyllysine). At lysine 255 the chain carries N6-acetyllysine; alternate. An N6-succinyllysine; alternate modification is found at lysine 255.

This sequence belongs to the glycine N-acyltransferase family. In terms of assembly, binds to microtubules. As to expression, specifically expressed in kidney and liver. Up-regulated in the regenerating liver as well as in hepatocellular carcinoma.

The protein resides in the cytoplasm. It localises to the cytoskeleton. It is found in the microtubule organizing center. The protein localises to the centrosome. It catalyses the reaction an acyl-CoA + glycine = an N-acylglycine + CoA + H(+). Its function is as follows. Acyltransferase which transfers the acyl group to the N-terminus of glycine. Can conjugate a multitude of substrates to form a variety of N-acylglycines. This chain is Glycine N-acyltransferase-like protein Keg1 (Keg1), found in Rattus norvegicus (Rat).